Reading from the N-terminus, the 197-residue chain is Recombination protein RecR (197 aa).

The C4-type zinc-finger motif lies at 56-71 (CQQCRTLTEQALCNIC). The region spanning 79–174 (KELCIVETPA…KVSRIAHGIP (96 aa)) is the Toprim domain.

The protein belongs to the RecR family.

In terms of biological role, may play a role in DNA repair. It seems to be involved in an RecBC-independent recombinational process of DNA repair. It may act with RecF and RecO. The polypeptide is Recombination protein RecR (Saccharophagus degradans (strain 2-40 / ATCC 43961 / DSM 17024)).